The sequence spans 426 residues: D-tagatose-1,6-bisphosphate aldolase subunit KbaZ (426 aa).

This sequence belongs to the GatZ/KbaZ family. KbaZ subfamily. Forms a complex with KbaY.

Its pathway is carbohydrate metabolism; D-tagatose 6-phosphate degradation; D-glyceraldehyde 3-phosphate and glycerone phosphate from D-tagatose 6-phosphate: step 2/2. Component of the tagatose-1,6-bisphosphate aldolase KbaYZ that is required for full activity and stability of the Y subunit. Could have a chaperone-like function for the proper and stable folding of KbaY. When expressed alone, KbaZ does not show any aldolase activity. The protein is D-tagatose-1,6-bisphosphate aldolase subunit KbaZ of Escherichia coli O6:K15:H31 (strain 536 / UPEC).